Here is an 869-residue protein sequence, read N- to C-terminus: Rho GTPase-activating protein 27 (869 aa).

In terms of domain architecture, SH3 spans 6–69; the sequence is EGDVYVLVEH…PAQYVRELPA (64 aa). Positions 104-137 are disordered; sequence GADGSSAEPRGRASSLCGPARQRTSGQRNSLAPG. Residues S155, S215, and S249 each carry the phosphoserine modification. 2 WW domains span residues 246-280 and 299-333; these read PRLS…SPFE and ESLE…DETE. Disordered stretches follow at residues 275 to 299, 331 to 389, and 447 to 474; these read WESP…GSGE, ETEE…DLGP, and VPVP…PEEK. Positions 331 to 343 are enriched in acidic residues; that stretch reads ETEELEDDPEEQL. The segment covering 345-356 has biased composition (polar residues); that stretch reads MQPSLSPRSPGQ. S350 is subject to Phosphoserine. One can recognise a WW 3 domain in the interval 414 to 447; it reads QFTQEQWVRLEDQEGKPYFYNPEDSSVQWELPQV. Phosphoserine is present on residues S459 and S462. T464 carries the post-translational modification Phosphothreonine. At S469 the chain carries Phosphoserine. One can recognise a PH domain in the interval 477–593; sequence TLDKAGVLHR…WHKAIAEGIE (117 aa). Residues 598–644 form a disordered region; sequence DLPQREEGEPSSADFGSSERLGSWKEEDVRPNAASPSLNPGSQESDL. The segment covering 631–642 has biased composition (polar residues); it reads ASPSLNPGSQES. Residue S632 is modified to Phosphoserine. The Rho-GAP domain occupies 677-866; the sequence is CALAQLCERE…LILHQCADIF (190 aa).

In terms of assembly, interacts with SH3KBP1/CIN85.

It is found in the cytoplasm. It localises to the membrane. In terms of biological role, rho GTPase-activating protein which may be involved in clathrin-mediated endocytosis. GTPase activators for the Rho-type GTPases act by converting them to an inactive GDP-bound state. Has activity toward CDC42 and RAC1. The polypeptide is Rho GTPase-activating protein 27 (Arhgap27) (Rattus norvegicus (Rat)).